The following is a 157-amino-acid chain: Peptide methionine sulfoxide reductase MsrA (157 aa).

The active site involves C10.

It belongs to the MsrA Met sulfoxide reductase family.

The catalysed reaction is L-methionyl-[protein] + [thioredoxin]-disulfide + H2O = L-methionyl-(S)-S-oxide-[protein] + [thioredoxin]-dithiol. It carries out the reaction [thioredoxin]-disulfide + L-methionine + H2O = L-methionine (S)-S-oxide + [thioredoxin]-dithiol. Has an important function as a repair enzyme for proteins that have been inactivated by oxidation. Catalyzes the reversible oxidation-reduction of methionine sulfoxide in proteins to methionine. This is Peptide methionine sulfoxide reductase MsrA from Clostridium perfringens (strain SM101 / Type A).